The following is a 163-amino-acid chain: MRDGVAIYPGTFDPFTRGHEDLVRRASLLFDQVVVGVAESRGKAPIFTLEERVEIAREVVKPFPNVRVAGFDGLLMDFLRAQNGRVILRGLRAVSDFEYEFQMAGMNRKLFPDVETVFLTPAEEYMFISATMVREIARLGGDVSKFVQPSVLTQLQQKVSSKR.

T11 is a binding site for substrate. Residues 11–12 (TF) and H19 each bind ATP. Positions 43, 75, and 89 each coordinate substrate. ATP contacts are provided by residues 90 to 92 (GLR), E100, and 125 to 131 (YMFISAT).

Belongs to the bacterial CoaD family. As to quaternary structure, homohexamer. It depends on Mg(2+) as a cofactor.

The protein localises to the cytoplasm. The catalysed reaction is (R)-4'-phosphopantetheine + ATP + H(+) = 3'-dephospho-CoA + diphosphate. Its pathway is cofactor biosynthesis; coenzyme A biosynthesis; CoA from (R)-pantothenate: step 4/5. Its function is as follows. Reversibly transfers an adenylyl group from ATP to 4'-phosphopantetheine, yielding dephospho-CoA (dPCoA) and pyrophosphate. In Azoarcus sp. (strain BH72), this protein is Phosphopantetheine adenylyltransferase.